A 608-amino-acid polypeptide reads, in one-letter code: ATP-citrate synthase beta chain protein 1 (608 aa).

ATP contacts are provided by residues 214–234 (ILRF…ELGG) and 265–291 (FKSE…KNQA). Glutamate 231 lines the Mg(2+) pocket. Histidine 273 acts as the Tele-phosphohistidine intermediate in catalysis. 292–302 (LQDAGATVPTS) contributes to the CoA binding site.

Belongs to the succinate/malate CoA ligase alpha subunit family. In terms of assembly, heterooctamer of 4 alpha and 4 beta chains.

The protein resides in the cytoplasm. Its subcellular location is the cytosol. The enzyme catalyses oxaloacetate + acetyl-CoA + ADP + phosphate = citrate + ATP + CoA. Its function is as follows. ATP citrate-lyase is the primary enzyme responsible for the synthesis of cytosolic acetyl-CoA, used for the elongation of fatty acids and biosynthesis of isoprenoids, flavonoids and malonated derivatives. May supply substrate to the cytosolic acetyl-CoA carboxylase, which generates the malonyl-CoA used for the synthesis of a multitude of compounds, including very long chain fatty acids and flavonoids. Required for normal growth and development and elongation of C18 fatty acids to C20 to C24 fatty acids in seeds. In contrast to all known animal ACL enzymes having a homomeric structure, plant ACLs are composed of alpha and beta chains. The protein is ATP-citrate synthase beta chain protein 1 (ACLB-1) of Arabidopsis thaliana (Mouse-ear cress).